Here is a 557-residue protein sequence, read N- to C-terminus: Ribonuclease J 2 (557 aa).

Residues His-76, His-78, His-144, and Glu-166 each coordinate Zn(2+). A substrate-binding site is contributed by 366–370; the sequence is HASSH.

Belongs to the metallo-beta-lactamase superfamily. RNA-metabolizing metallo-beta-lactamase-like family. Bacterial RNase J subfamily. As to quaternary structure, homodimer, may be a subunit of the RNA degradosome. It depends on Zn(2+) as a cofactor.

It is found in the cytoplasm. Its function is as follows. An RNase that has 5'-3' exonuclease and possibly endoonuclease activity. Involved in maturation of rRNA and in some organisms also mRNA maturation and/or decay. This chain is Ribonuclease J 2, found in Staphylococcus saprophyticus subsp. saprophyticus (strain ATCC 15305 / DSM 20229 / NCIMB 8711 / NCTC 7292 / S-41).